Here is a 149-residue protein sequence, read N- to C-terminus: 3-dehydroquinate dehydratase (149 aa).

The active-site Proton acceptor is the Y21. Residues N73, H79, and D86 each contribute to the substrate site. Catalysis depends on H99, which acts as the Proton donor. Substrate-binding positions include 100–101 (LT) and R110.

It belongs to the type-II 3-dehydroquinase family. In terms of assembly, homododecamer.

It catalyses the reaction 3-dehydroquinate = 3-dehydroshikimate + H2O. It functions in the pathway metabolic intermediate biosynthesis; chorismate biosynthesis; chorismate from D-erythrose 4-phosphate and phosphoenolpyruvate: step 3/7. Catalyzes a trans-dehydration via an enolate intermediate. The polypeptide is 3-dehydroquinate dehydratase (Thermus thermophilus (strain ATCC BAA-163 / DSM 7039 / HB27)).